We begin with the raw amino-acid sequence, 162 residues long: COP9 signalosome complex subunit 9 (162 aa).

The 113-residue stretch at 6 to 118 (ETIKSLEDPY…SVSKSMKFSR (113 aa)) folds into the PCI domain.

Component of a COP9 signalosome-like (CSN) complex, composed of at least RRI1/CSN5, CSN9, RRI2/CSN10, PCI8/CSN11, CSN12 and CSI1. In the complex, it probably interacts directly with CSN12 and CSI1. Also interacts with RPN5.

The protein resides in the cytoplasm. It is found in the nucleus. In terms of biological role, component of the COP9 signalosome (CSN) complex that acts as a regulator of the ubiquitin (Ubl) conjugation pathway by mediating the deneddylation of the cullin subunit of SCF-type E3 ubiquitin-protein ligase complexes. The CSN complex is involved in the regulation of the mating pheromone response. This is COP9 signalosome complex subunit 9 (CSN9) from Saccharomyces cerevisiae (strain ATCC 204508 / S288c) (Baker's yeast).